Here is a 790-residue protein sequence, read N- to C-terminus: AMP deaminase (790 aa).

The segment covering 1–14 has biased composition (polar residues); the sequence is MSTPLRGSSPQVSF. The disordered stretch occupies residues 1-26; the sequence is MSTPLRGSSPQVSFYESELDQEGGSD. Zn(2+) contacts are provided by His221 and His223. Residues His223 and 292-297 contribute to the substrate site; that span reads KFNLKY. His488 provides a ligand contact to Zn(2+). Residue Glu491 coordinates substrate. Residue His510 is the Proton acceptor of the active site. Asp565 serves as a coordination point for Zn(2+). 566–569 contacts substrate; it reads DPLQ. Disordered stretches follow at residues 698-726 and 739-790; these read NKLR…SSPG and PPPL…KSDK. Composition is skewed to low complexity over residues 706 to 726 and 750 to 781; these read GSTP…SSPG and NNNN…TTTN.

Belongs to the metallo-dependent hydrolases superfamily. Adenosine and AMP deaminases family. As to quaternary structure, homodimer. Zn(2+) serves as cofactor.

Its subcellular location is the cytoplasm. The enzyme catalyses AMP + H2O + H(+) = IMP + NH4(+). Its pathway is purine metabolism; IMP biosynthesis via salvage pathway; IMP from AMP: step 1/1. With respect to regulation, activated by ATP, inhibited by GTP, EDTA and inorganic phosphate. In terms of biological role, catalyzes the conversion of adenosine monophosphate (AMP) to inosine monophosphate (IMP) and ammonia (NH4(+)). Participates in the regulation of the adenylated nucleotide pool and the interconversion to guanylated nucleotides during early morphodifferentiation. This Dictyostelium discoideum (Social amoeba) protein is AMP deaminase (amdA).